Reading from the N-terminus, the 89-residue chain is Peroxidase (89 aa).

His-52 contacts heme. Residues Thr-53 and Asp-68 each coordinate Ca(2+).

The cofactor is heme b. Requires Ca(2+) as cofactor.

It localises to the secreted. The enzyme catalyses 2 a phenolic donor + H2O2 = 2 a phenolic radical donor + 2 H2O. Removal of H(2)O(2), oxidation of toxic reductants, biosynthesis and degradation of lignin, suberization, auxin catabolism, response to environmental stresses such as wounding, pathogen attack and oxidative stress. These functions might be dependent on each isozyme/isoform in each plant tissue. Active against p-coumaryl alcohol, coniferyl alcohol and coniferyl aldehyde. In Ginkgo biloba (Ginkgo), this protein is Peroxidase.